Here is a 101-residue protein sequence, read N- to C-terminus: Small ribosomal subunit protein uS10 (101 aa).

Belongs to the universal ribosomal protein uS10 family. As to quaternary structure, part of the 30S ribosomal subunit.

In terms of biological role, involved in the binding of tRNA to the ribosomes. The polypeptide is Small ribosomal subunit protein uS10 (Cytophaga hutchinsonii (strain ATCC 33406 / DSM 1761 / CIP 103989 / NBRC 15051 / NCIMB 9469 / D465)).